The following is a 495-amino-acid chain: Lysine--tRNA ligase (495 aa).

Mg(2+) contacts are provided by glutamate 406 and glutamate 413.

The protein belongs to the class-II aminoacyl-tRNA synthetase family. As to quaternary structure, homodimer. The cofactor is Mg(2+).

Its subcellular location is the cytoplasm. It catalyses the reaction tRNA(Lys) + L-lysine + ATP = L-lysyl-tRNA(Lys) + AMP + diphosphate. The protein is Lysine--tRNA ligase (lysS) of Staphylococcus aureus.